Consider the following 92-residue polypeptide: MEEVAREEVEIDKDLRRKIKKTVKKILESSNLYKITEIKAREEASLKLDLDLSQDPYKVIVKEEVENFLEEAVKLIGNKLAMLPKRIESTSI.

Positions 13-70 (KDLRRKIKKTVKKILESSNLYKITEIKAREEASLKLDLDLSQDPYKVIVKEEVENFLE) constitute a DEK-C domain.

In terms of assembly, associated with the Mediator complex.

The protein resides in the nucleus. The chain is Mediator-associated protein 3 from Arabidopsis thaliana (Mouse-ear cress).